We begin with the raw amino-acid sequence, 354 residues long: Protein angel (354 aa).

The interval 22–59 is disordered; the sequence is VSSQAKGASGKRKQKAKEMESSHDRNRRWTSLGNQAEG.

Belongs to the CCR4/nocturin family. In terms of tissue distribution, ubiquitously expressed in embryos.

The polypeptide is Protein angel (angel) (Drosophila melanogaster (Fruit fly)).